The chain runs to 509 residues: Maturase K (509 aa).

Belongs to the intron maturase 2 family. MatK subfamily.

The protein resides in the plastid. The protein localises to the chloroplast. Usually encoded in the trnK tRNA gene intron. Probably assists in splicing its own and other chloroplast group II introns. The polypeptide is Maturase K (Drimys granadensis).